Reading from the N-terminus, the 368-residue chain is tRNA-specific 2-thiouridylase MnmA (368 aa).

Residues 11-18 (GMSGGVDS) and M37 contribute to the ATP site. The segment at 97 to 99 (NPD) is interaction with target base in tRNA. Catalysis depends on C102, which acts as the Nucleophile. Cysteines 102 and 199 form a disulfide. G127 is a binding site for ATP. The interaction with tRNA stretch occupies residues 149–151 (KDQ). Catalysis depends on C199, which acts as the Cysteine persulfide intermediate. Residues 311–312 (RY) form an interaction with tRNA region.

It belongs to the MnmA/TRMU family. Interacts with TusE.

It is found in the cytoplasm. The enzyme catalyses S-sulfanyl-L-cysteinyl-[protein] + uridine(34) in tRNA + AH2 + ATP = 2-thiouridine(34) in tRNA + L-cysteinyl-[protein] + A + AMP + diphosphate + H(+). Its function is as follows. Catalyzes the 2-thiolation of uridine at the wobble position (U34) of tRNA(Lys), tRNA(Glu) and tRNA(Gln), leading to the formation of s(2)U34, the first step of tRNA-mnm(5)s(2)U34 synthesis. Sulfur is provided by IscS, via a sulfur-relay system. Binds ATP and its substrate tRNAs. This chain is tRNA-specific 2-thiouridylase MnmA, found in Escherichia coli O139:H28 (strain E24377A / ETEC).